The sequence spans 123 residues: MPTINQLIRKGRKKVKKKKTAPALQGSPQKRGVCTRVYTATPKKPNSALRKVARVRLTNGIEVTAYIPGIGHNLQEHSVVLVRGGRVKDLPGVRYHIVRGALDAAGVEGRKQGRSKYGVKKPK.

Positions 10-20 (KGRKKVKKKKT) are enriched in basic residues. Positions 10-32 (KGRKKVKKKKTAPALQGSPQKRG) are disordered. Asp89 carries the 3-methylthioaspartic acid modification.

This sequence belongs to the universal ribosomal protein uS12 family. As to quaternary structure, part of the 30S ribosomal subunit. Contacts proteins S8 and S17. May interact with IF1 in the 30S initiation complex.

In terms of biological role, with S4 and S5 plays an important role in translational accuracy. Interacts with and stabilizes bases of the 16S rRNA that are involved in tRNA selection in the A site and with the mRNA backbone. Located at the interface of the 30S and 50S subunits, it traverses the body of the 30S subunit contacting proteins on the other side and probably holding the rRNA structure together. The combined cluster of proteins S8, S12 and S17 appears to hold together the shoulder and platform of the 30S subunit. The protein is Small ribosomal subunit protein uS12 of Halothermothrix orenii (strain H 168 / OCM 544 / DSM 9562).